The primary structure comprises 443 residues: Histidinol dehydrogenase (443 aa).

NAD(+) contacts are provided by tyrosine 127, glutamine 185, and asparagine 208. Residues serine 234, glutamine 256, and histidine 259 each coordinate substrate. Zn(2+) contacts are provided by glutamine 256 and histidine 259. Active-site proton acceptor residues include glutamate 323 and histidine 324. Residues histidine 324, aspartate 357, glutamate 411, and histidine 416 each contribute to the substrate site. Aspartate 357 is a binding site for Zn(2+). A Zn(2+)-binding site is contributed by histidine 416.

This sequence belongs to the histidinol dehydrogenase family. Requires Zn(2+) as cofactor.

The catalysed reaction is L-histidinol + 2 NAD(+) + H2O = L-histidine + 2 NADH + 3 H(+). Its pathway is amino-acid biosynthesis; L-histidine biosynthesis; L-histidine from 5-phospho-alpha-D-ribose 1-diphosphate: step 9/9. Functionally, catalyzes the sequential NAD-dependent oxidations of L-histidinol to L-histidinaldehyde and then to L-histidine. The protein is Histidinol dehydrogenase of Photobacterium profundum (strain SS9).